Consider the following 816-residue polypeptide: Microbial collagenase (816 aa).

Positions 1-27 are cleaved as a signal peptide; sequence MSHIRFFPRHRLALACMLASVSSFSFA. His-435 lines the Zn(2+) pocket. Residue Glu-436 is part of the active site. Residue His-439 participates in Zn(2+) binding.

It belongs to the peptidase M9A family. Requires Zn(2+) as cofactor.

The protein localises to the secreted. The catalysed reaction is Digestion of native collagen in the triple helical region at Xaa-|-Gly bonds. With synthetic peptides, a preference is shown for Gly at P3 and P1', Pro and Ala at P2 and P2', and hydroxyproline, Ala or Arg at P3'.. Functionally, possesses gelatinolytic activity. Can cause weak haemolysis on blood agar. The polypeptide is Microbial collagenase (prt) (Vibrio parahaemolyticus serotype O3:K6 (strain RIMD 2210633)).